Reading from the N-terminus, the 291-residue chain is Small ribosomal subunit biogenesis GTPase RsgA (291 aa).

The region spanning Asn63 to Leu221 is the CP-type G domain. GTP-binding positions include Thr112–Asp115 and Gly164–Thr172. Zn(2+) contacts are provided by Cys245, Cys250, His252, and Cys258.

It belongs to the TRAFAC class YlqF/YawG GTPase family. RsgA subfamily. In terms of assembly, monomer. Associates with 30S ribosomal subunit, binds 16S rRNA. It depends on Zn(2+) as a cofactor.

Its subcellular location is the cytoplasm. Functionally, one of several proteins that assist in the late maturation steps of the functional core of the 30S ribosomal subunit. Helps release RbfA from mature subunits. May play a role in the assembly of ribosomal proteins into the subunit. Circularly permuted GTPase that catalyzes slow GTP hydrolysis, GTPase activity is stimulated by the 30S ribosomal subunit. This Staphylococcus epidermidis (strain ATCC 12228 / FDA PCI 1200) protein is Small ribosomal subunit biogenesis GTPase RsgA.